A 427-amino-acid chain; its full sequence is 3-phosphoshikimate 1-carboxyvinyltransferase (427 aa).

Positions 23, 24, and 28 each coordinate 3-phosphoshikimate. K23 contributes to the phosphoenolpyruvate binding site. G97 and R125 together coordinate phosphoenolpyruvate. 3-phosphoshikimate contacts are provided by S170, S171, Q172, S198, D314, N337, and K341. Position 172 (Q172) interacts with phosphoenolpyruvate. D314 serves as the catalytic Proton acceptor. Phosphoenolpyruvate contacts are provided by R345, R387, and K412.

It belongs to the EPSP synthase family. As to quaternary structure, monomer.

The protein localises to the cytoplasm. The enzyme catalyses 3-phosphoshikimate + phosphoenolpyruvate = 5-O-(1-carboxyvinyl)-3-phosphoshikimate + phosphate. The protein operates within metabolic intermediate biosynthesis; chorismate biosynthesis; chorismate from D-erythrose 4-phosphate and phosphoenolpyruvate: step 6/7. Functionally, catalyzes the transfer of the enolpyruvyl moiety of phosphoenolpyruvate (PEP) to the 5-hydroxyl of shikimate-3-phosphate (S3P) to produce enolpyruvyl shikimate-3-phosphate and inorganic phosphate. The sequence is that of 3-phosphoshikimate 1-carboxyvinyltransferase from Buchnera aphidicola subsp. Baizongia pistaciae (strain Bp).